A 215-amino-acid polypeptide reads, in one-letter code: Orotate phosphoribosyltransferase (215 aa).

Lys-25 serves as a coordination point for 5-phospho-alpha-D-ribose 1-diphosphate. Residue Phe-33–Phe-34 coordinates orotate. Residues Tyr-71 to Lys-72, Arg-98, Lys-99, Lys-102, His-104, and Asp-124 to Ala-132 contribute to the 5-phospho-alpha-D-ribose 1-diphosphate site. Residues Thr-128 and Arg-156 each coordinate orotate.

This sequence belongs to the purine/pyrimidine phosphoribosyltransferase family. PyrE subfamily. As to quaternary structure, homodimer.

It carries out the reaction orotidine 5'-phosphate + diphosphate = orotate + 5-phospho-alpha-D-ribose 1-diphosphate. Its pathway is pyrimidine metabolism; UMP biosynthesis via de novo pathway; UMP from orotate: step 1/2. In terms of biological role, catalyzes the transfer of a ribosyl phosphate group from 5-phosphoribose 1-diphosphate to orotate, leading to the formation of orotidine monophosphate (OMP). The chain is Orotate phosphoribosyltransferase (ura5) from Schizosaccharomyces pombe (strain 972 / ATCC 24843) (Fission yeast).